Here is a 238-residue protein sequence, read N- to C-terminus: ATP synthase subunit a (238 aa).

The next 5 membrane-spanning stretches (helical) occupy residues 18 to 38, 76 to 96, 114 to 134, 166 to 186, and 193 to 213; these read LTLL…VFWA, YSLL…LGLF, NLAF…IEGV, SLAI…GLIV, and VYWW…SVFI.

This sequence belongs to the ATPase A chain family. F-type ATPases have 2 components, CF(1) - the catalytic core - and CF(0) - the membrane proton channel. CF(1) has five subunits: alpha(3), beta(3), gamma(1), delta(1), epsilon(1). CF(0) has three main subunits: a(1), b(2) and c(9-12). The alpha and beta chains form an alternating ring which encloses part of the gamma chain. CF(1) is attached to CF(0) by a central stalk formed by the gamma and epsilon chains, while a peripheral stalk is formed by the delta and b chains.

Its subcellular location is the cell membrane. Key component of the proton channel; it plays a direct role in the translocation of protons across the membrane. The polypeptide is ATP synthase subunit a (Streptococcus pyogenes serotype M5 (strain Manfredo)).